We begin with the raw amino-acid sequence, 414 residues long: NADH kinase POS5, mitochondrial (414 aa).

Belongs to the NAD kinase family.

The protein resides in the mitochondrion matrix. The catalysed reaction is NADH + ATP = ADP + NADPH + H(+). Its function is as follows. Phosphorylates both NADH and NAD(+), with a twofold preference for NADH. Anti-oxidant factor and key source of the cellular reductant NADPH. This chain is NADH kinase POS5, mitochondrial (POS5), found in Saccharomyces cerevisiae (strain ATCC 204508 / S288c) (Baker's yeast).